A 299-amino-acid polypeptide reads, in one-letter code: Protoheme IX farnesyltransferase (299 aa).

9 helical membrane passes run 25–45 (VVVL…RAGV), 47–67 (WTVL…AAAV), 95–115 (LAAL…LLTF), 119–139 (LAAW…TGFL), 147–167 (IVIG…AVSG), 173–193 (PLLL…ALAI), 218–238 (LHIL…YAIH), 243–263 (LYLL…WALY), and 279–299 (IRYL…PLTL).

This sequence belongs to the UbiA prenyltransferase family. Protoheme IX farnesyltransferase subfamily.

Its subcellular location is the cell inner membrane. It catalyses the reaction heme b + (2E,6E)-farnesyl diphosphate + H2O = Fe(II)-heme o + diphosphate. It functions in the pathway porphyrin-containing compound metabolism; heme O biosynthesis; heme O from protoheme: step 1/1. In terms of biological role, converts heme B (protoheme IX) to heme O by substitution of the vinyl group on carbon 2 of heme B porphyrin ring with a hydroxyethyl farnesyl side group. The polypeptide is Protoheme IX farnesyltransferase (Azotobacter vinelandii (strain DJ / ATCC BAA-1303)).